An 815-amino-acid chain; its full sequence is Glycogen phosphorylase (815 aa).

Lys662 bears the N6-(pyridoxal phosphate)lysine mark.

This sequence belongs to the glycogen phosphorylase family. It depends on pyridoxal 5'-phosphate as a cofactor.

The catalysed reaction is [(1-&gt;4)-alpha-D-glucosyl](n) + phosphate = [(1-&gt;4)-alpha-D-glucosyl](n-1) + alpha-D-glucose 1-phosphate. Functionally, phosphorylase is an important allosteric enzyme in carbohydrate metabolism. Enzymes from different sources differ in their regulatory mechanisms and in their natural substrates. However, all known phosphorylases share catalytic and structural properties. The protein is Glycogen phosphorylase (glgP) of Shigella flexneri.